Consider the following 242-residue polypeptide: 3-oxoacyl-[acyl-carrier-protein] reductase FabG (242 aa).

NADP(+) contacts are provided by residues 10–13 (GSTR), Thr35, 57–58 (NV), and Asn84. Position 136 (Ser136) interacts with substrate. Tyr149 (proton acceptor) is an active-site residue. Residues 149-153 (YCAAK) and Ile182 contribute to the NADP(+) site.

Belongs to the short-chain dehydrogenases/reductases (SDR) family. Homotetramer.

It carries out the reaction a (3R)-hydroxyacyl-[ACP] + NADP(+) = a 3-oxoacyl-[ACP] + NADPH + H(+). The protein operates within lipid metabolism; fatty acid biosynthesis. Catalyzes the NADPH-dependent reduction of beta-ketoacyl-ACP substrates to beta-hydroxyacyl-ACP products, the first reductive step in the elongation cycle of fatty acid biosynthesis. This Haemophilus influenzae (strain ATCC 51907 / DSM 11121 / KW20 / Rd) protein is 3-oxoacyl-[acyl-carrier-protein] reductase FabG (fabG).